The primary structure comprises 99 residues: Ragulator complex protein LAMTOR4 (99 aa).

Residue Met1 is modified to N-acetylmethionine. An N-acetylthreonine; in Ragulator complex protein LAMTOR4, N-terminally processed modification is found at Thr2. At Ser67 the chain carries Phosphoserine.

This sequence belongs to the LAMTOR4 family. Part of the Ragulator complex composed of LAMTOR1, LAMTOR2, LAMTOR3, LAMTOR4 and LAMTOR5. LAMTOR4 and LAMTOR5 form a heterodimer that interacts, through LAMTOR1, with a LAMTOR2, LAMTOR3 heterodimer. The Ragulator complex interacts with both the mTORC1 complex and heterodimers constituted of the Rag GTPases RagA/RRAGA, RagB/RRAGB, RagC/RRAGC and RagD/RRAGD; regulated by amino acid availability. The Ragulator complex interacts with SLC38A9; the probable amino acid sensor. Component of the lysosomal folliculin complex (LFC), composed of FLCN, FNIP1 (or FNIP2), RagA/RRAGA or RagB/RRAGB GDP-bound, RagC/RRAGC or RagD/RRAGD GTP-bound, and Ragulator. Post-translationally, phosphorylation at Ser-67 by PKA inhibits Ragulator complex assembly.

The protein localises to the lysosome. Functionally, as part of the Ragulator complex it is involved in amino acid sensing and activation of mTORC1, a signaling complex promoting cell growth in response to growth factors, energy levels, and amino acids. Activated by amino acids through a mechanism involving the lysosomal V-ATPase, the Ragulator plays a dual role for the small GTPases Rag (RagA/RRAGA, RagB/RRAGB, RagC/RRAGC and/or RagD/RRAGD): it (1) acts as a guanine nucleotide exchange factor (GEF), activating the small GTPases Rag and (2) mediates recruitment of Rag GTPases to the lysosome membrane. Activated Ragulator and Rag GTPases function as a scaffold recruiting mTORC1 to lysosomes where it is in turn activated. In Bos taurus (Bovine), this protein is Ragulator complex protein LAMTOR4 (LAMTOR4).